We begin with the raw amino-acid sequence, 328 residues long: HTH-type transcriptional regulator MalR (328 aa).

Residues 2–57 enclose the HTH lacI-type domain; the sequence is PVTIKDVAKAAGVSPSTVTRVIQNKSTISDETKKRVRKAMKELNYHPNLNARSLVS. Residues 5 to 24 constitute a DNA-binding region (H-T-H motif); that stretch reads IKDVAKAAGVSPSTVTRVIQ. Residues 173-218 are inducer binding; sequence TEYFIKKGCKRIAFIGGSKKLFVTKDRLTGYEQALKHYKLTTDNNR. Residues 282–291 are dimerization; that stretch reads NLAAYVDINS.

In terms of biological role, transcriptional repressor of the maltosaccharide utilization operons malxCD and malMP. This chain is HTH-type transcriptional regulator MalR (malR), found in Streptococcus pneumoniae serotype 4 (strain ATCC BAA-334 / TIGR4).